We begin with the raw amino-acid sequence, 246 residues long: Putative outer membrane protein YiaT (246 aa).

The N-terminal stretch at 1–21 (MLINRNIVALFALPFMASATA) is a signal peptide.

It belongs to the MipA/OmpV family.

It localises to the cell outer membrane. The chain is Putative outer membrane protein YiaT (yiaT) from Escherichia coli O157:H7.